The chain runs to 182 residues: MNELQVKFNEKVKQDIMKNFGYKSPMQIPRIKKIVINMTAGNEVSNTKAVEEVINELTLITGQTPYKTHAKKSLASFKIREGMPMGGKVTLRRDKMWDFLQKLIDIVIPRIRDFRGISPKSFDGRGNFALGIEEEIIFPEIDFDKIRRNKGLDVIIVTSANTDSEAKYLLEKLGMPFAKATN.

This sequence belongs to the universal ribosomal protein uL5 family. As to quaternary structure, part of the 50S ribosomal subunit; part of the 5S rRNA/L5/L18/L25 subcomplex. Contacts the 5S rRNA and the P site tRNA. Forms a bridge to the 30S subunit in the 70S ribosome.

Its function is as follows. This is one of the proteins that bind and probably mediate the attachment of the 5S RNA into the large ribosomal subunit, where it forms part of the central protuberance. In the 70S ribosome it contacts protein S13 of the 30S subunit (bridge B1b), connecting the 2 subunits; this bridge is implicated in subunit movement. Contacts the P site tRNA; the 5S rRNA and some of its associated proteins might help stabilize positioning of ribosome-bound tRNAs. The protein is Large ribosomal subunit protein uL5 of Mycoplasma mobile (strain ATCC 43663 / 163K / NCTC 11711) (Mesomycoplasma mobile).